Here is a 785-residue protein sequence, read N- to C-terminus: Cadherin-7 (785 aa).

An N-terminal signal peptide occupies residues 1 to 27 (MKLGKVELCHFLQLIALFLCFSGMSQA). The propeptide occupies 28–47 (ELPRSRSKPYFQSGRSRTKR). At 28–607 (ELPRSRSKPY…AYVLPAGLST (580 aa)) the chain is on the extracellular side. 5 Cadherin domains span residues 49–153 (WVWN…EPKF), 154–262 (LDGP…PPRF), 263–377 (PRRS…PPVF), 378–482 (SSPL…APEF), and 482–599 (FAMD…AEAY). Residues Asn-449 and Asn-530 are each glycosylated (N-linked (GlcNAc...) asparagine). The chain crosses the membrane as a helical span at residues 608 to 628 (GALIAILACVLTLLVLILLIV). The Cytoplasmic portion of the chain corresponds to 629–785 (TMRRRKKEPL…YGNGQESLYS (157 aa)).

It is found in the cell membrane. Functionally, cadherins are calcium-dependent cell adhesion proteins. They preferentially interact with themselves in a homophilic manner in connecting cells; cadherins may thus contribute to the sorting of heterogeneous cell types. The polypeptide is Cadherin-7 (Cdh7) (Mus musculus (Mouse)).